The sequence spans 205 residues: LexA repressor (205 aa).

The H-T-H motif DNA-binding region spans 28 to 48; it reads IRDIMKHFNFKSPRAAHKHLI. Active-site for autocatalytic cleavage activity residues include Ser125 and Lys163.

It belongs to the peptidase S24 family. As to quaternary structure, homodimer.

It catalyses the reaction Hydrolysis of Ala-|-Gly bond in repressor LexA.. Represses a number of genes involved in the response to DNA damage (SOS response), including recA and lexA. In the presence of single-stranded DNA, RecA interacts with LexA causing an autocatalytic cleavage which disrupts the DNA-binding part of LexA, leading to derepression of the SOS regulon and eventually DNA repair. This Petrotoga mobilis (strain DSM 10674 / SJ95) protein is LexA repressor.